Reading from the N-terminus, the 592-residue chain is NADH-ubiquinone oxidoreductase chain 5 (592 aa).

The next 14 helical transmembrane spans lie at 36–56, 68–88, 89–109, 132–152, 169–189, 196–216, 229–249, 256–276, 279–299, 322–342, 364–386, 406–426, 451–471, and 534–554; these read LSMV…IYAI, FYII…SDNY, IMMF…ISFW, LFVI…FETM, MMLL…GWLL, TPVS…FVLV, LLVM…MAVV, VMAL…GSSA, LAMY…MSAG, LPFS…MPGL, YIMY…RVTY, STHM…LGYA, LPAM…LTTV, and ALIN…IVFF.

The protein belongs to the complex I subunit 5 family.

It localises to the mitochondrion inner membrane. The catalysed reaction is a ubiquinone + NADH + 5 H(+)(in) = a ubiquinol + NAD(+) + 4 H(+)(out). Core subunit of the mitochondrial membrane respiratory chain NADH dehydrogenase (Complex I) that is believed to belong to the minimal assembly required for catalysis. Complex I functions in the transfer of electrons from NADH to the respiratory chain. The immediate electron acceptor for the enzyme is believed to be ubiquinone. This chain is NADH-ubiquinone oxidoreductase chain 5 (ND5), found in Debaryomyces hansenii (strain ATCC 36239 / CBS 767 / BCRC 21394 / JCM 1990 / NBRC 0083 / IGC 2968) (Yeast).